Reading from the N-terminus, the 727-residue chain is Capsid protein VP1 (727 aa).

The span at 1-10 shows a compositional bias: basic residues; sequence MAPPAKRARR. Disordered regions lie at residues 1 to 38 and 95 to 184; these read MAPP…SDAA and VLTD…VGIS. A Nuclear localization signal motif is present at residues 4–13; the sequence is PAKRARRGLV. A phospholipase A2-like region spans residues 19-64; sequence YLGPGNSLDQGEPTNPSDAAAKEHDEAYAAYLRSGKNPYLYFSPAD. A compositionally biased stretch (polar residues) spans 25 to 35; the sequence is SLDQGEPTNPS. The segment covering 166-183 has biased composition (gly residues); the sequence is SGNGSGGGGGGGSGGVGI. Asparagine 323 serves as a coordination point for Mg(2+). Residues 507–536 are disordered; sequence AQTDENQAADGDPRYAFGRQHGQKTTTTGE. A disulfide bridge links cysteine 633 with cysteine 637.

It belongs to the parvoviridae capsid protein family. In terms of assembly, interacts with host TFRC.

The protein localises to the virion. It localises to the host nucleus. Its function is as follows. Capsid protein self-assembles to form an icosahedral capsid with a T=1 symmetry, about 22 nm in diameter, and consisting of 60 copies of two size variants of the capsid proteins, VP1 and VP2, which differ by the presence of an N-terminal extension in the minor protein VP1. The capsid encapsulates the genomic ssDNA. Capsid proteins are responsible for the attachment to host cell receptor TFRC. This attachment induces virion internalization predominantly through clathrin-dependent endocytosis. Binding to the host receptors also induces capsid rearrangements leading to surface exposure of VP1 N-terminus. The chain is Capsid protein VP1 from Feline panleukopenia virus (FPV).